The chain runs to 109 residues: Nucleoid-associated protein ETA_24730 (109 aa).

The protein belongs to the YbaB/EbfC family. Homodimer.

It localises to the cytoplasm. The protein localises to the nucleoid. Functionally, binds to DNA and alters its conformation. May be involved in regulation of gene expression, nucleoid organization and DNA protection. The sequence is that of Nucleoid-associated protein ETA_24730 from Erwinia tasmaniensis (strain DSM 17950 / CFBP 7177 / CIP 109463 / NCPPB 4357 / Et1/99).